The sequence spans 938 residues: MSDYKKTLHLPDTKFPMKANLTQREPEMLKFWEGIDAYAAMAQASGQKGQYVLHDGPPYANGHIHLGTALNKILKDMVVKSRNMQGYAARYVPGWDCHGLPIEHKVEQELGEKKKELPAHVVRKRCRQYAEKYLDIQRKEFKRLGVLGAWDKPYMTMDPAYESATARELGNFVAAGNVVRSKKPIYWCCSCQTALAEAEVEYYDHTSPSIFVRFPLRDPKVADVLNVDPASAWIVIWTTTPWTLPDNMAVAVHPDHDYAVVRHDGAHYVLAAALVESSAKTFGWENCEVVSTVPGAKLEGLVATHPFYDRPSPVVLADYVVLDSGTGCVHTAPGHGREDYETGLRYGLEILSPLNDEGRFLDSVPFFAGLTVFEANPKVIEKLREVGNLLAERKISHSYPHCWRCKKPVIFRATTQWFIAMEKNDLRARALSAIRNDVRWIPAWGEERIHNMIEFRPDWCISRQRTWGVPIIALLCEGCGEAWNDAAWMRDIADRFAKHPTGCDYWYETPLEGIVPAGLACPHCGGNHWKKETDILDVWFDSGTSFSAVLEQRGDTAFPADLYLEGSDQHRGWFHSSLLASMGTRGVPPYRAVLTHGYVVDGEGRKMSKSIGNVIAPQEIIDKYGAEILRLWVASVDYREDIRISDEILSRLVDAYRRIRNTCRYLLGNIDDLTPEEIVPFSVMDPLDRYALDIVTDAHARIQEAYSEFEFHKVFHTLHNLCVTDLSAFYLDVLKDRLYASAKDSPERRSAQTALLHILLVLVRDMAPVLSFTAEEVFRHIPEALRPAAATVFALRGSDTPLYNVSSDESERWEAVLAVRSEVTKAIEPLRKAGTVGHSLDTHVTLYADHKLADLLRATGTDLRAVFIVSKLNIAPLEDAPQDAFASDEVKGLRIGVAKAPGAKCERCWIYHEELGADPGYPGACARCTTVLRTSGAE.

Residues 58 to 68 carry the 'HIGH' region motif; the sequence is PYANGHIHLGT. E565 contributes to the L-isoleucyl-5'-AMP binding site. The short motif at 606-610 is the 'KMSKS' region element; it reads KMSKS. K609 provides a ligand contact to ATP. Zn(2+) is bound by residues C905, C908, C925, and C928.

This sequence belongs to the class-I aminoacyl-tRNA synthetase family. IleS type 1 subfamily. As to quaternary structure, monomer. Requires Zn(2+) as cofactor.

The protein resides in the cytoplasm. It catalyses the reaction tRNA(Ile) + L-isoleucine + ATP = L-isoleucyl-tRNA(Ile) + AMP + diphosphate. In terms of biological role, catalyzes the attachment of isoleucine to tRNA(Ile). As IleRS can inadvertently accommodate and process structurally similar amino acids such as valine, to avoid such errors it has two additional distinct tRNA(Ile)-dependent editing activities. One activity is designated as 'pretransfer' editing and involves the hydrolysis of activated Val-AMP. The other activity is designated 'posttransfer' editing and involves deacylation of mischarged Val-tRNA(Ile). This is Isoleucine--tRNA ligase from Nitratidesulfovibrio vulgaris (strain DSM 19637 / Miyazaki F) (Desulfovibrio vulgaris).